The sequence spans 523 residues: MLAMSPPKPAVELDRHIDLDQAHAVASGGARIVLAPPARDRCRASEARLGAVIREARHVYGLTTGFGPLANRLISGENVRTLQANLVHHLASGVGPVLDWTTARAMVLARLVSIAQGASGASEGTIARLIDLLNSELAPAVPSRGTVGASGDLTPLAHMVLCLQGRGDFLDRDGTRLDGAEGLRRGRLQPLDLSHRDALALVNGTSAMTGIALVNAHACRHLGNWAVALTALLAECLRGRTEAWAAALSDLRPHPGQKDAAARLRARVDGSARVVRHVIAERRLDAGDIGTEPEAGQDAYSLRCAPQVLGAGFDTLAWHDRVLTIELNAVTDNPVFPPDGSVPALHGGNFMGQHVALTSDALATAVTVLAGLAERQIARLTDERLNRGLPPFLHRGPAGLNSGFMGAQVTATALLAEMRATGPASIHSISTNAANQDVVSLGTIAARLCREKIDRWAEILAILALCLAQAAELRCGSGLDGVSPAGKKLVQALREQFPPLETDRPLGQEIAALATHLLQQSPV.

The active-site Proton donor/acceptor is Tyr-60. Position 89 (His-89) interacts with substrate. Residues 149-151 (ASG) constitute a cross-link (5-imidazolinone (Ala-Gly)). 2,3-didehydroalanine (Ser) is present on Ser-150. Substrate-binding positions include Arg-303 and 432–436 (NAANQ).

It belongs to the PAL/histidase family. In terms of assembly, homotetramer. Contains an active site 4-methylidene-imidazol-5-one (MIO), which is formed autocatalytically by cyclization and dehydration of residues Ala-Ser-Gly.

The enzyme catalyses L-tyrosine = (E)-4-coumarate + NH4(+). Its function is as follows. Catalyzes the non-oxidative deamination of L-tyrosine. Has very low phenylalanine ammonia-lyase activity (in vitro). This is Tyrosine ammonia-lyase (hutH) from Cereibacter sphaeroides (strain ATCC 17023 / DSM 158 / JCM 6121 / CCUG 31486 / LMG 2827 / NBRC 12203 / NCIMB 8253 / ATH 2.4.1.) (Rhodobacter sphaeroides).